The sequence spans 394 residues: Phosphopentomutase (394 aa).

6 residues coordinate Mn(2+): Asp-14, Asp-287, His-292, Asp-328, His-329, and His-340.

It belongs to the phosphopentomutase family. It depends on Mn(2+) as a cofactor.

It localises to the cytoplasm. It catalyses the reaction 2-deoxy-alpha-D-ribose 1-phosphate = 2-deoxy-D-ribose 5-phosphate. The enzyme catalyses alpha-D-ribose 1-phosphate = D-ribose 5-phosphate. It participates in carbohydrate degradation; 2-deoxy-D-ribose 1-phosphate degradation; D-glyceraldehyde 3-phosphate and acetaldehyde from 2-deoxy-alpha-D-ribose 1-phosphate: step 1/2. In terms of biological role, isomerase that catalyzes the conversion of deoxy-ribose 1-phosphate (dRib-1-P) and ribose 1-phosphate (Rib-1-P) to deoxy-ribose 5-phosphate (dRib-5-P) and ribose 5-phosphate (Rib-5-P), respectively. This chain is Phosphopentomutase, found in Listeria welshimeri serovar 6b (strain ATCC 35897 / DSM 20650 / CCUG 15529 / CIP 8149 / NCTC 11857 / SLCC 5334 / V8).